Reading from the N-terminus, the 449-residue chain is UDP-N-acetylglucosamine 1-carboxyvinyltransferase (449 aa).

Residue 51–52 (KN) participates in phosphoenolpyruvate binding. Residue Arg121 participates in UDP-N-acetyl-alpha-D-glucosamine binding. Cys145 functions as the Proton donor in the catalytic mechanism. Cys145 is subject to 2-(S-cysteinyl)pyruvic acid O-phosphothioketal. UDP-N-acetyl-alpha-D-glucosamine contacts are provided by residues 150-154 (RPVDQ), Asp333, and Ile355.

This sequence belongs to the EPSP synthase family. MurA subfamily.

Its subcellular location is the cytoplasm. The catalysed reaction is phosphoenolpyruvate + UDP-N-acetyl-alpha-D-glucosamine = UDP-N-acetyl-3-O-(1-carboxyvinyl)-alpha-D-glucosamine + phosphate. Its pathway is cell wall biogenesis; peptidoglycan biosynthesis. In terms of biological role, cell wall formation. Adds enolpyruvyl to UDP-N-acetylglucosamine. In Burkholderia mallei (strain ATCC 23344), this protein is UDP-N-acetylglucosamine 1-carboxyvinyltransferase.